The chain runs to 729 residues: MGGFLPKAEGPGSQLQKLLPSFLVREQDWDQHLDKLHMLQQKRILESPLLRASKENDLSVLRQLLLDCTCDVRQRGALGETALHIAALYDNLEAALVLMEAAPELVFEPTTCEAFAGQTALHIAVVNQNVNLVRALLTRRASVSARATGTAFRHSPRNLIYFGEHPLSFAACVNSEEIVRLLIEHGADIRAQDSLGNTVLHILILQPNKTFACQMYNLLLSYDGHGDHLQPLDLVPNHQGLTPFKLAGVEGNTVMFQHLMQKRRHIQWTYGPLTSILYDLTEIDSWGEELSFLELVVSSDKREARQILEQTPVKELVSFKWNKYGRPYFCILAALYLLYMICFTTCCVYRPLKFRGGNRTHSRDITILQQKLLQEAYETREDIIRLVGELVSIVGAVIILLLEIPDIFRVGASRYFGKTILGGPFHVIIITYASLVLVTMVMRLTNTNGEVVPMSFALVLGWCSVMYFTRGFQMLGPFTIMIQKMIFGDLMRFCWLMAVVILGFASAFYIIFQTEDPTSLGQFYDYPMALFTTFELFLTVIDAPANYDVDLPFMFSIVNFAFTIIATLLMLNLFIAMMGDTHWRVAQERDELWRAQVVATTVMLERKLPRCLWPRSGICGCEFGLGDRWFLRVENHNDQNPLRVLRYVEVFKNSDKEDDQEHPSEKQPSGAESGTLARASLALPTSSLSRTASQSSSHRGWEILRQNTLGHLNLGLNLSEGDGEEVYHF.

At 1 to 327 (MGGFLPKAEG…SFKWNKYGRP (327 aa)) the chain is on the cytoplasmic side. ANK repeat units lie at residues 44 to 74 (ILES…DVRQ), 78 to 107 (LGET…ELVF), 116 to 145 (AGQT…SVSA), 162 to 191 (FGEH…DIRA), 195 to 228 (LGNT…HGDH), and 239 to 268 (QGLT…HIQW). A helical transmembrane segment spans residues 328–348 (YFCILAALYLLYMICFTTCCV). Over 349 to 385 (YRPLKFRGGNRTHSRDITILQQKLLQEAYETREDIIR) the chain is Extracellular. N-linked (GlcNAc...) asparagine glycosylation is present at Asn-358. Residues 386 to 408 (LVGELVSIVGAVIILLLEIPDIF) traverse the membrane as a helical segment. The Cytoplasmic segment spans residues 409–419 (RVGASRYFGKT). Residues 420–442 (ILGGPFHVIIITYASLVLVTMVM) form a helical membrane-spanning segment. Residues 443 to 448 (RLTNTN) are Extracellular-facing. Residues 449-469 (GEVVPMSFALVLGWCSVMYFT) form a helical membrane-spanning segment. Residues 470–492 (RGFQMLGPFTIMIQKMIFGDLMR) are Cytoplasmic-facing. The chain crosses the membrane as a helical span at residues 493–513 (FCWLMAVVILGFASAFYIIFQ). Positions 524-544 (YDYPMALFTTFELFLTVIDAP) form an intramembrane region, pore-forming. Asp-542 provides a ligand contact to Ca(2+). The chain crosses the membrane as a helical span at residues 557–577 (IVNFAFTIIATLLMLNLFIAM). The Cytoplasmic segment spans residues 578-729 (MGDTHWRVAQ…EGDGEEVYHF (152 aa)). The segment at 598–602 (VATTV) is interaction with S100A10. Residues 650 to 653 (VFKN) are involved in Ca(2+)-dependent inactivation. Positions 654 to 665 (SDKEDDQEHPSE) are enriched in basic and acidic residues. Residues 654–675 (SDKEDDQEHPSEKQPSGAESGT) are disordered. Thr-685 carries the phosphothreonine modification. Residue Ser-689 is modified to Phosphoserine. Residues 700 to 729 (GWEILRQNTLGHLNLGLNLSEGDGEEVYHF) form an involved in Ca(2+)-dependent inactivation region.

This sequence belongs to the transient receptor (TC 1.A.4) family. TrpV subfamily. TRPV5 sub-subfamily. In terms of assembly, homotetramer and probably heterotetramer with TRPV6. Interacts with TRPV6. Interacts with S100A10 and probably with the ANAX2-S100A10 heterotetramer. The interaction with S100A10 is required for the trafficking to the plasma membrane. Interacts with calmodulin. Interacts with BSPRY, which results in its inactivation. In terms of processing, glycosylated. In terms of tissue distribution, expressed at high levels in kidney, small intestine and pancreas, and at lower levels in testis, prostate, placenta, brain, colon and rectum.

Its subcellular location is the apical cell membrane. It catalyses the reaction Ca(2+)(in) = Ca(2+)(out). With respect to regulation, activated by WNK3. Constitutively active calcium selective cation channel thought to be involved in Ca(2+) reabsorption in kidney and intestine. Required for normal Ca(2+) reabsorption in the kidney distal convoluted tubules. The channel is activated by low internal calcium level and the current exhibits an inward rectification. A Ca(2+)-dependent feedback regulation includes fast channel inactivation and slow current decay. Heteromeric assembly with TRPV6 seems to modify channel properties. TRPV5-TRPV6 heteromultimeric concatemers exhibit voltage-dependent gating. The protein is Transient receptor potential cation channel subfamily V member 5 (TRPV5) of Homo sapiens (Human).